The following is a 147-amino-acid chain: Large ribosomal subunit protein uL13 (147 aa).

The protein belongs to the universal ribosomal protein uL13 family. Part of the 50S ribosomal subunit.

This protein is one of the early assembly proteins of the 50S ribosomal subunit, although it is not seen to bind rRNA by itself. It is important during the early stages of 50S assembly. This chain is Large ribosomal subunit protein uL13, found in Corynebacterium diphtheriae (strain ATCC 700971 / NCTC 13129 / Biotype gravis).